Consider the following 67-residue polypeptide: Ferredoxin (67 aa).

4Fe-4S ferredoxin-type domains lie at 3–31 (WKVSVDQDTCIGDAICASLCPDVFEMNDE) and 36–67 (PKVEIIEDEELYNCAKEAMESCPVSAITIEEA). Residues cysteine 12, aspartate 15, and cysteine 18 each contribute to the [4Fe-4S] cluster site. Cysteine 22 and cysteine 49 are joined by a disulfide. [4Fe-4S] cluster is bound at residue cysteine 57.

The cofactor is [4Fe-4S] cluster. It depends on [3Fe-4S] cluster as a cofactor.

Functionally, ferredoxins are iron-sulfur proteins that transfer electrons in a wide variety of metabolic reactions. The polypeptide is Ferredoxin (fdxA) (Pyrococcus abyssi (strain GE5 / Orsay)).